A 205-amino-acid polypeptide reads, in one-letter code: Methyltransferase-like 26 B (205 aa).

This sequence belongs to the UPF0585 family.

The chain is Methyltransferase-like 26 B from Danio rerio (Zebrafish).